Reading from the N-terminus, the 519-residue chain is Protein disulfide-isomerase A5 (519 aa).

Positions 1–21 (MARAGPAWLLLAIWVVLPSWL) are cleaved as a signal peptide. 4 disulfides stabilise this stretch: cysteine 85–cysteine 94, cysteine 182–cysteine 185, cysteine 305–cysteine 308, and cysteine 426–cysteine 429. Thioredoxin domains follow at residues 134 to 261 (FLKD…NPQP), 270 to 384 (PWAD…NPEA), and 378 to 506 (WMQN…ALRE). The Prevents secretion from ER signature appears at 516–519 (KEEL).

Belongs to the protein disulfide isomerase family. As to quaternary structure, interacts with CALR (via P-domain).

The protein resides in the endoplasmic reticulum lumen. It carries out the reaction Catalyzes the rearrangement of -S-S- bonds in proteins.. The sequence is that of Protein disulfide-isomerase A5 (PDIA5) from Homo sapiens (Human).